A 366-amino-acid polypeptide reads, in one-letter code: tRNA/tmRNA (uracil-C(5))-methyltransferase (366 aa).

S-adenosyl-L-methionine is bound by residues glutamine 189, tyrosine 217, asparagine 222, glutamate 238, and aspartate 298. The active-site Nucleophile is cysteine 323. Glutamate 357 (proton acceptor) is an active-site residue.

Belongs to the class I-like SAM-binding methyltransferase superfamily. RNA M5U methyltransferase family. TrmA subfamily.

The catalysed reaction is uridine(54) in tRNA + S-adenosyl-L-methionine = 5-methyluridine(54) in tRNA + S-adenosyl-L-homocysteine + H(+). It carries out the reaction uridine(341) in tmRNA + S-adenosyl-L-methionine = 5-methyluridine(341) in tmRNA + S-adenosyl-L-homocysteine + H(+). In terms of biological role, dual-specificity methyltransferase that catalyzes the formation of 5-methyluridine at position 54 (m5U54) in all tRNAs, and that of position 341 (m5U341) in tmRNA (transfer-mRNA). The chain is tRNA/tmRNA (uracil-C(5))-methyltransferase from Shewanella putrefaciens (strain CN-32 / ATCC BAA-453).